The following is a 294-amino-acid chain: Eukaryotic translation initiation factor 3 subunit G (294 aa).

Basic and acidic residues predominate over residues 1–22; sequence MQTFHHQDTGSEDFRQNTMDEK. 2 disordered regions span residues 1 to 42 and 164 to 211; these read MQTF…DGTK and GGMG…SDDD. Positions 30–42 are enriched in polar residues; it reads STPQITQNADGTK. Positions 193 to 205 are enriched in gly residues; that stretch reads GPGGPGGPGGAAG. Positions 214-292 constitute an RRM domain; it reads LTLRVTNLSE…LIMKVDYSKK (79 aa).

Belongs to the eIF-3 subunit G family. As to quaternary structure, component of the eukaryotic translation initiation factor 3 (eIF-3) complex.

It localises to the cytoplasm. RNA-binding component of the eukaryotic translation initiation factor 3 (eIF-3) complex, which is involved in protein synthesis of a specialized repertoire of mRNAs and, together with other initiation factors, stimulates binding of mRNA and methionyl-tRNAi to the 40S ribosome. The eIF-3 complex specifically targets and initiates translation of a subset of mRNAs involved in cell proliferation. This subunit can bind 18S rRNA. This is Eukaryotic translation initiation factor 3 subunit G from Yarrowia lipolytica (strain CLIB 122 / E 150) (Yeast).